A 232-amino-acid polypeptide reads, in one-letter code: DNA repair and recombination protein RadB (232 aa).

It belongs to the eukaryotic RecA-like protein family. RadB subfamily.

Involved in DNA repair and in homologous recombination. May regulate the cleavage reactions of the branch-structured DNA. Has a very weak ATPase activity that is not stimulated by DNA. Binds DNA but does not promote DNA strands exchange. This Methanosphaera stadtmanae (strain ATCC 43021 / DSM 3091 / JCM 11832 / MCB-3) protein is DNA repair and recombination protein RadB.